The chain runs to 1176 residues: 3-hydroxy-3-methylglutaryl-coenzyme A reductase (1176 aa).

Residues 1 to 34 are Cytoplasmic-facing; that stretch reads MSLPNHSGSSAFKSFSYIVGTGIKRAAKLSTRNP. Residues 35–55 form a helical membrane-spanning segment; it reads IEMIVVVLILSSFSYFYLFNL. Residues 56–299 are Lumenal-facing; sequence ARTSDIFSGT…VKELIDLADN (244 aa). 2 N-linked (GlcNAc...) asparagine glycosylation sites follow: Asn224 and Asn238. The chain crosses the membrane as a helical span at residues 300–320; it reads IDIIVILVGYIMMIATFISLY. The 165-residue stretch at 301–465 folds into the SSD domain; that stretch reads DIIVILVGYI…FTWYTAVLAL (165 aa). At 321-330 the chain is on the cytoplasmic side; it reads VNMRAMGSRY. Residues 331 to 351 form a helical membrane-spanning segment; sequence TLATAVVFNGFFSFMLALLTV. Residues 352–355 are Lumenal-facing; it reads RALG. Residues 356 to 376 traverse the membrane as a helical segment; that stretch reads VDVYPVVLAEAIPFLAVTIGF. Topologically, residues 377-422 are cytoplasmic; it reads ERPFKLTKRVFQFSKETPLTKQEIRTTIMRAVDTVALPIARDCFME. The helical transmembrane segment at 423-443 threads the bilayer; that stretch reads IIVLVLGAKSGISGLEEFCLL. Position 444 (Ser444) is a topological domain, lumenal. Residues 445–465 traverse the membrane as a helical segment; the sequence is AILLAYDFIIMFTWYTAVLAL. At 466–524 the chain is on the cytoplasmic side; it reads KLELLRIREINGISADDIKKGTKKSTGYIRRTVIKAFSDDHAAGANTANQKADGPIIGR. A helical membrane pass occupies residues 525-545; the sequence is VKLLMIVGFVVMHIFKFCSAF. Topologically, residues 546-622 are lumenal; that stretch reads QSVGPQVNIT…DTYAVYIQHP (77 aa). 2 N-linked (GlcNAc...) asparagine glycosylation sites follow: Asn553 and Asn596. A helical membrane pass occupies residues 623–643; sequence VISKWLTIALFVSLFLNTYLF. Topologically, residues 644–1176 are cytoplasmic; sequence NVAKQPKQIV…GTEPGTCIKS (533 aa). Residues 699–724 form a disordered region; sequence PNHKRSHNHHHSHSHSHNHHSNHHQS. The segment covering 700 to 721 has biased composition (basic residues); the sequence is NHKRSHNHHHSHSHSHNHHSNH. The active-site Charge relay system is the Glu841. CoA is bound at residue 847-853; it reads STARGCK. NADP(+) is bound by residues 907-909 and 934-942; these read SRF and DAMGMNMIS. The Charge relay system role is filled by Lys972. 1001 to 1003 serves as a coordination point for CoA; the sequence is VLK. Asp1048 acts as the Charge relay system in catalysis. A CoA-binding site is contributed by 1145–1146; it reads AH. Catalysis depends on His1146, which acts as the Proton donor. Residue 1150 to 1151 coordinates NADP(+); that stretch reads NR. Residues 1153 to 1176 are disordered; sequence TQAPTITSGPAPSTGTEPGTCIKS.

The protein belongs to the HMG-CoA reductase family.

It is found in the endoplasmic reticulum membrane. The catalysed reaction is (R)-mevalonate + 2 NADP(+) + CoA = (3S)-3-hydroxy-3-methylglutaryl-CoA + 2 NADPH + 2 H(+). It participates in metabolic intermediate biosynthesis; (R)-mevalonate biosynthesis; (R)-mevalonate from acetyl-CoA: step 3/3. Functionally, HMG-CoA reductase; part of the first module of ergosterol biosynthesis pathway that includes the early steps of the pathway, conserved across all eukaryotes, and which results in the formation of mevalonate from acetyl-coenzyme A (acetyl-CoA). In this module, the cytosolic acetyl-CoA acetyltransferase catalyzes the formation of acetoacetyl-CoA. The hydroxymethylglutaryl-CoA synthase then condenses acetyl-CoA with acetoacetyl-CoA to form HMG-CoA. The rate-limiting step of the early module is the reduction to mevalonate by the 3-hydroxy-3-methylglutaryl-coenzyme A (HMG-CoA) reductase hmgA. The sequence is that of 3-hydroxy-3-methylglutaryl-coenzyme A reductase from Phycomyces blakesleeanus (strain ATCC 8743b / DSM 1359 / FGSC 10004 / NBRC 33097 / NRRL 1555).